A 261-amino-acid polypeptide reads, in one-letter code: Large ribosomal subunit protein uL3 (261 aa).

The span at serine 138–glycine 148 shows a compositional bias: low complexity. Disordered stretches follow at residues serine 138 to alanine 163 and alanine 214 to alanine 261. The residue at position 151 (glutamine 151) is an N5-methylglutamine. A compositionally biased stretch (low complexity) spans alanine 227–alanine 261.

It belongs to the universal ribosomal protein uL3 family. Part of the 50S ribosomal subunit. Forms a cluster with proteins L14 and L19. Post-translationally, methylated by PrmB.

Functionally, one of the primary rRNA binding proteins, it binds directly near the 3'-end of the 23S rRNA, where it nucleates assembly of the 50S subunit. The protein is Large ribosomal subunit protein uL3 of Phenylobacterium zucineum (strain HLK1).